A 183-amino-acid polypeptide reads, in one-letter code: Adenylate kinase (183 aa).

12-17 (GAGKGT) provides a ligand contact to ATP. The NMP stretch occupies residues 32-61 (STGDLLRAEVSAGSALGQEAESVMNRGELV). AMP contacts are provided by residues Thr33, Arg38, 59–61 (ELV), 86–89 (GFPR), and Gln93. The tract at residues 127 to 133 (SRGRDDD) is LID. ATP is bound at residue Arg128. Residues Arg130 and Arg141 each contribute to the AMP site. An ATP-binding site is contributed by Gly169.

It belongs to the adenylate kinase family. As to quaternary structure, monomer.

It is found in the cytoplasm. It catalyses the reaction AMP + ATP = 2 ADP. Its pathway is purine metabolism; AMP biosynthesis via salvage pathway; AMP from ADP: step 1/1. Functionally, catalyzes the reversible transfer of the terminal phosphate group between ATP and AMP. Plays an important role in cellular energy homeostasis and in adenine nucleotide metabolism. This is Adenylate kinase from Synechococcus sp. (strain CC9311).